We begin with the raw amino-acid sequence, 90 residues long: Large ribosomal subunit protein bL27 (90 aa).

The segment covering Met-1 to Gly-13 has biased composition (low complexity). The segment at Met-1–Arg-20 is disordered.

Belongs to the bacterial ribosomal protein bL27 family.

The chain is Large ribosomal subunit protein bL27 from Anaplasma marginale (strain Florida).